Reading from the N-terminus, the 438-residue chain is Nudix hydrolase 19, chloroplastic (438 aa).

Residues 1 to 36 (MLALFLSSSSYPTLSFLSRSVTLNLARTTTLSALTM) constitute a chloroplast transit peptide. Cys-212, Cys-215, Cys-230, and Cys-235 together coordinate Zn(2+). Substrate is bound by residues Tyr-240, 276-278 (AGF), Glu-292, Glu-296, and Glu-342. The Nudix hydrolase domain occupies 241 to 371 (PRVDPVVIML…EYRKAQRTAA (131 aa)). Ala-276, Glu-292, Glu-296, and Glu-342 together coordinate Mg(2+). A Nudix box motif is present at residues 277 to 298 (GFIEPGESLEEAVRRETWEETG). The short motif at 422-424 (PDD) is the Microbody targeting signal element.

This sequence belongs to the Nudix hydrolase family. NudC subfamily. Mg(2+) serves as cofactor. Requires Zn(2+) as cofactor. In terms of tissue distribution, expressed in roots, leaves, stems and inflorescences.

It is found in the plastid. The protein resides in the chloroplast. The catalysed reaction is a 5'-end NAD(+)-phospho-ribonucleoside in mRNA + H2O = a 5'-end phospho-adenosine-phospho-ribonucleoside in mRNA + beta-nicotinamide D-ribonucleotide + 2 H(+). It carries out the reaction NAD(+) + H2O = beta-nicotinamide D-ribonucleotide + AMP + 2 H(+). It catalyses the reaction NADH + H2O = reduced beta-nicotinamide D-ribonucleotide + AMP + 2 H(+). Its function is as follows. mRNA decapping enzyme that specifically removes the nicotinamide adenine dinucleotide (NAD) cap from a subset of mRNAs by hydrolyzing the diphosphate linkage to produce nicotinamide mononucleotide (NMN) and 5' monophosphate mRNA. The NAD-cap is present at the 5'-end of some RNAs; in contrast to the canonical N7 methylguanosine (m7G) cap, the NAD cap promotes mRNA decay. Mediates the hydrolysis of some nucleoside diphosphate derivatives. Has a high affinity for NADPH compared with that for NADH. The protein is Nudix hydrolase 19, chloroplastic (NUDT19) of Arabidopsis thaliana (Mouse-ear cress).